Reading from the N-terminus, the 68-residue chain is Large ribosomal subunit protein uL29 (68 aa).

The protein belongs to the universal ribosomal protein uL29 family.

The sequence is that of Large ribosomal subunit protein uL29 from Chloroflexus aurantiacus (strain ATCC 29364 / DSM 637 / Y-400-fl).